A 1108-amino-acid chain; its full sequence is Transmembrane protein 132C (1108 aa).

The first 27 residues, 1-27, serve as a signal peptide directing secretion; it reads MRSEGAAPGPAAPLCGALSLLLGALLG. The Extracellular portion of the chain corresponds to 28-922; that stretch reads KVIEGHGVTD…LVQTPRGLSD (895 aa). 2 N-linked (GlcNAc...) asparagine glycosylation sites follow: Asn316 and Asn373. Residues 820–836 are compositionally biased toward basic and acidic residues; the sequence is HASDRRQKGQHHERTGQ. Residues 820 to 857 form a disordered region; it reads HASDRRQKGQHHERTGQDGHLYGSSPVEREEGALRRAT. Residues 923-943 traverse the membrane as a helical segment; the sequence is LEIGMYALLGVFCLAILVFLI. The Cytoplasmic segment spans residues 944–1108; sequence NCATFALKYR…NYLEKLKDKA (165 aa). The disordered stretch occupies residues 1022 to 1072; sequence QSQIHRSADSGGRQGREQKQDPLHSPTSKRKKVKFTTFTTIPPDDSCPTVN.

It belongs to the TMEM132 family.

Its subcellular location is the membrane. The protein is Transmembrane protein 132C (TMEM132C) of Homo sapiens (Human).